The sequence spans 367 residues: Heme A synthase (367 aa).

8 helical membrane passes run 26–46, 111–131, 139–159, 174–194, 212–232, 272–292, 305–325, and 327–347; these read IRGW…VGGA, LLAR…WVTG, LPLL…WWMV, LATH…IYRG, AAVI…VAGL, FVHR…MIAA, SVLL…TLLL, and VPIG…GFAI. Position 274 (His-274) interacts with heme. His-335 is a heme binding site.

Belongs to the COX15/CtaA family. Type 2 subfamily. As to quaternary structure, interacts with CtaB. It depends on heme b as a cofactor.

The protein resides in the cell membrane. The catalysed reaction is Fe(II)-heme o + 2 A + H2O = Fe(II)-heme a + 2 AH2. Its pathway is porphyrin-containing compound metabolism; heme A biosynthesis; heme A from heme O: step 1/1. Functionally, catalyzes the conversion of heme O to heme A by two successive hydroxylations of the methyl group at C8. The first hydroxylation forms heme I, the second hydroxylation results in an unstable dihydroxymethyl group, which spontaneously dehydrates, resulting in the formyl group of heme A. This chain is Heme A synthase, found in Sinorhizobium medicae (strain WSM419) (Ensifer medicae).